Reading from the N-terminus, the 377-residue chain is Guanine nucleotide-binding protein subunit beta (377 aa).

7 WD repeats span residues 63 to 93 (GHTG…IVWN), 105 to 135 (LPCA…SIFN), 154 to 185 (GHKG…VLWD), 202 to 233 (GHTA…RLWD), 246 to 276 (CHEG…RLFD), 293 to 323 (GDIP…YVWD), and 339 to 369 (SHEG…KIWA).

It belongs to the WD repeat G protein beta family. In terms of assembly, g proteins are composed of 3 units, alpha, beta and gamma.

It localises to the cell membrane. The protein localises to the endoplasmic reticulum membrane. Its function is as follows. Guanine nucleotide-binding proteins (G proteins) are involved as a modulator or transducer in various transmembrane signaling systems. The beta and gamma chains are required for the GTPase activity, for replacement of GDP by GTP, and for G protein-effector interaction. The sequence is that of Guanine nucleotide-binding protein subunit beta from Nicotiana plumbaginifolia (Leadwort-leaved tobacco).